A 130-amino-acid polypeptide reads, in one-letter code: Small ribosomal subunit protein uS9 (130 aa).

This sequence belongs to the universal ribosomal protein uS9 family.

The sequence is that of Small ribosomal subunit protein uS9 from Polaromonas sp. (strain JS666 / ATCC BAA-500).